The primary structure comprises 434 residues: MNIDMANSDDKALISEDTAHQISADPWYQVGFVLTTGVNSAYVLGYSGSVMVPLGWIGGTCGLILAAAISLYANALLARLHEIGGKRHIRYRDLAGHIYGRKMYSLTWALQYVNLFMINTGFIILAGQALKATYVLFRDDGVLKLPYCIALSGFVCALFAFGIPYLSALRIWLGFSTFFSLIYITIAFVLSLRDGITTPAKDYTIPGSHSARIFTTIGAVANLVFAYNTGMLPEIQATIRPPVVKNMEKALWFQFTVGSLPLYAVTFMGYWAYGSSTSSYLLNSVKGPVWVKAMANLSAFLQTVIALHIFASPMYEFLDTKYGSGHGGPFAIHNVMFRVGVRGGYLTVNTLVAAMLPFLGDFMSLTGALSTFPLTFVLANHMYLMVKRHKLSTLQISWHWLNVAGFSLLSIAAAVAALRLIMVDSRTYHLFADL.

11 consecutive transmembrane segments (helical) span residues 26-46 (PWYQ…VLGY), 49-69 (SVMV…AAAI), 106-126 (LTWA…IILA), 149-169 (IALS…LSAL), 171-191 (IWLG…FVLS), 213-233 (IFTT…GMLP), 251-271 (LWFQ…MGYW), 297-317 (LSAF…MYEF), 339-359 (VGVR…LPFL), 362-382 (FMSL…ANHM), and 403-423 (VAGF…LIMV).

Belongs to the amino acid/polyamine transporter 2 family. Amino acid/auxin permease (AAAP) (TC 2.A.18.3) subfamily.

Its subcellular location is the cell membrane. In terms of biological role, proline transporter that mediates proline transport across the plasma membrane. The protein is Probable proline transporter 2 of Oryza sativa subsp. japonica (Rice).